Reading from the N-terminus, the 711-residue chain is Amyloid beta precursor protein binding family B member 1 (711 aa).

Ser-135 is modified (phosphoserine). Disordered regions lie at residues 140–257, 277–300, and 321–364; these read NTQG…SDLP, GTTQWEPPGRASPSQGNSPQEESQ, and EPSE…QRNA. Residues 156 to 174 show a composition bias toward acidic residues; that stretch reads EVEEEDEDEEEEDEEEEDL. At Lys-205 the chain carries N6-acetyllysine. Residues 224-235 are compositionally biased toward polar residues; that stretch reads SWATLSQGSPSY. The 33-residue stretch at 254–286 folds into the WW domain; that stretch reads SDLPAGWMRVQDTSGTYYWHIPTGTTQWEPPGR. Residues 288-300 are compositionally biased toward polar residues; that stretch reads SPSQGNSPQEESQ. 2 PID domains span residues 365–533 and 538–700; these read NPGI…QVEF and NELV…LWGS. Ser-460 carries the post-translational modification Phosphoserine; by PKC. Ser-518 is subject to Phosphoserine. Tyr-548 carries the phosphotyrosine; by ABL1 modification. Ser-611 carries the phosphoserine; by SGK1 modification. Position 702 is an N6-acetyllysine (Lys-702).

As to quaternary structure, component of a complex, at least composed of APBB1, RASD1/DEXRAS1 and APP. Interacts (via PID domain 2) with APP (with the intracellular domain of the amyloid-beta precursor protein). Interacts (via PID domain 2) with RASD1/DEXRAS1; impairs the transcription activation activity. Interacts (via PID domain 1) with KAT5/TIP60. Interacts (via the WW domain) with the proline-rich region of APBB1IP. Interacts with TSHZ1 and TSHZ2. Interacts (via the WW domain) with histone H2AX (when phosphorylated on 'Tyr-142') and the proline-rich region of ENAH. Interacts with MAPK8. Interacts (via PID domain 1) with TSHZ3 (via homeobox domain). Interacts with SET. Found in a trimeric complex with HDAC1 and TSHZ3; the interaction between HDAC1 and APBB1 is mediated by TSHZ3. Interacts (via WWW domain) with NEK6. Interacts (via WWW domain) with ABL1. Interacts with RNF157. Interacts with ARF6. In terms of processing, polyubiquitination by RNF157 leads to degradation by the proteasome. Phosphorylation at Ser-611 by SGK1 promotes its localization to the nucleus. Phosphorylated following nuclear translocation. Phosphorylation at Tyr-547 by ABL1 enhances transcriptional activation activity and reduces the affinity for RASD1/DEXRAS1. Phosphorylated at Ser-460 by PKC upon insulin activation. Post-translationally, acetylation at Lys-205 and Lys-702 by KAT5 promotes its transcription activator activity. As to expression, brain, not in liver, very low in other tissues. The long (neuron-specific) form is expressed only in brain.

The protein localises to the cell membrane. It is found in the cytoplasm. It localises to the nucleus. The protein resides in the cell projection. Its subcellular location is the growth cone. The protein localises to the nucleus speckle. In terms of biological role, transcription coregulator that can have both coactivator and corepressor functions. Adapter protein that forms a transcriptionally active complex with the gamma-secretase-derived amyloid precursor protein (APP) intracellular domain. Plays a central role in the response to DNA damage by translocating to the nucleus and inducing apoptosis. May act by specifically recognizing and binding histone H2AX phosphorylated on 'Tyr-142' (H2AXY142ph) at double-strand breaks (DSBs), recruiting other pro-apoptosis factors such as MAPK8/JNK1. Required for histone H4 acetylation at double-strand breaks (DSBs). Its ability to specifically bind modified histones and chromatin modifying enzymes such as KAT5/TIP60, probably explains its transcription activation activity. Functions in association with TSHZ3, SET and HDAC factors as a transcriptional repressor, that inhibits the expression of CASP4. Associates with chromatin in a region surrounding the CASP4 transcriptional start site(s). Involved in hippocampal neurite branching and neuromuscular junction formation, as a result plays a role in spatial memory functioning. Plays a role in the maintenance of lens transparency. May play a role in muscle cell strength. Acts as a molecular adapter that functions in neurite outgrowth by activating the RAC1-ARF6 axis upon insulin treatment. The protein is Amyloid beta precursor protein binding family B member 1 of Rattus norvegicus (Rat).